We begin with the raw amino-acid sequence, 483 residues long: 1-aminocyclopropane-1-carboxylate synthase 2 (483 aa).

At Lys275 the chain carries N6-(pyridoxal phosphate)lysine.

It belongs to the class-I pyridoxal-phosphate-dependent aminotransferase family. It depends on pyridoxal 5'-phosphate as a cofactor.

The enzyme catalyses S-adenosyl-L-methionine = 1-aminocyclopropane-1-carboxylate + S-methyl-5'-thioadenosine + H(+). It functions in the pathway alkene biosynthesis; ethylene biosynthesis via S-adenosyl-L-methionine; ethylene from S-adenosyl-L-methionine: step 1/2. Functionally, catalyzes the formation of 1-aminocyclopropane-1-carboxylate, a direct precursor of ethylene in higher plants. Involved in defense response by producing ethylene after pathogen infection. Involved in several phosphate deficiency-induced adaptive responses, such as lateral root elongation. This Oryza sativa subsp. japonica (Rice) protein is 1-aminocyclopropane-1-carboxylate synthase 2.